We begin with the raw amino-acid sequence, 764 residues long: Subtilisin-like protease SBT1.6 (764 aa).

The N-terminal stretch at 1-20 is a signal peptide; that stretch reads MASSTIVLLLFLSFPFISFA. An Inhibitor I9 domain is found at 46–99; the sequence is HWYSTEFAEESRIVHVYHTVFHGFSAVVTPDEADNLRNHPAVLAVFEDRRRELH. The Peptidase S8 domain occupies 103-606; that stretch reads SPQFLGLQNQ…SGHLNLGRAM (504 aa). Asp-131 functions as the Charge relay system in the catalytic mechanism. An N-linked (GlcNAc...) asparagine glycan is attached at Asn-191. His-205 serves as the catalytic Charge relay system. Residues 377-457 enclose the PA domain; sequence SSASLCMENT…NEGDRIKAYA (81 aa). Residue Ser-538 is the Charge relay system of the active site. Asn-578 carries N-linked (GlcNAc...) asparagine glycosylation.

It belongs to the peptidase S8 family. As to expression, expressed in roots, leaves and flowers of mature plants.

In Arabidopsis thaliana (Mouse-ear cress), this protein is Subtilisin-like protease SBT1.6.